Reading from the N-terminus, the 295-residue chain is Mycothiol acetyltransferase (295 aa).

N-acetyltransferase domains are found at residues V5–P141 and V149–R295. 1D-myo-inositol 2-(L-cysteinylamino)-2-deoxy-alpha-D-glucopyranoside is bound at residue E35. Residue L76–V78 participates in acetyl-CoA binding. Residues E176, K215, and E229 each contribute to the 1D-myo-inositol 2-(L-cysteinylamino)-2-deoxy-alpha-D-glucopyranoside site. Residues V233–V235 and R240–R246 contribute to the acetyl-CoA site. Y267 lines the 1D-myo-inositol 2-(L-cysteinylamino)-2-deoxy-alpha-D-glucopyranoside pocket. An acetyl-CoA-binding site is contributed by N272 to R277.

This sequence belongs to the acetyltransferase family. MshD subfamily. As to quaternary structure, monomer.

It catalyses the reaction 1D-myo-inositol 2-(L-cysteinylamino)-2-deoxy-alpha-D-glucopyranoside + acetyl-CoA = mycothiol + CoA + H(+). In terms of biological role, catalyzes the transfer of acetyl from acetyl-CoA to desacetylmycothiol (Cys-GlcN-Ins) to form mycothiol. The sequence is that of Mycothiol acetyltransferase from Thermobispora bispora (strain ATCC 19993 / DSM 43833 / CBS 139.67 / JCM 10125 / KCTC 9307 / NBRC 14880 / R51).